A 92-amino-acid chain; its full sequence is Defensin Lucifensin (92 aa).

The first 23 residues, 1-23 (MKFFMVFAVTFCLALSFVSQSLA), serve as a signal peptide directing secretion. The propeptide occupies 24–52 (LPADDEAHFVDGLEALKTIEPELHGRYKR). Disulfide bonds link Cys-55–Cys-82, Cys-68–Cys-88, and Cys-72–Cys-90.

The protein belongs to the invertebrate defensin family. Type 1 subfamily. In terms of processing, the disulfide bonds are essential for antimicrobial activity. In terms of tissue distribution, larval fat body, hemolymph and salivary glands (at protein level). Expressed in the salivary glands of all larval stages.

The protein localises to the secreted. It localises to the host cell membrane. In terms of biological role, shows strong antibacterial activity against numerous Gram-positive bacteria. It selectively inhibits peptidoglycan biosynthesis through complex formation with the cell wall precursor lipid II (1:1 molar ratio) thus inhibiting cell wall synthesis. Shows antibacterial activity against the Gram-positive bacteria M.luteus, E.fecalis (MIC=32 mg/L), S.aureus (MIC=16 mg/L), S.carnosus (MIC=2 mg/L), S.pneumoniae (MIC=2 mg/L) and S.pyogenes (MIC=2 mg/L) and against a number of methicillin-resistant S.aureus and glycopeptide-intermediate S.aureus isolates. Does not show antibacterial activity against Gram-negative bacteria or antifungal activity against C.utilis. Shows slight antifungal activity against C.albicans. The protein is Defensin Lucifensin of Lucilia sericata (Green bottle fly).